A 382-amino-acid polypeptide reads, in one-letter code: Lipid-A-disaccharide synthase (382 aa).

It belongs to the LpxB family.

The enzyme catalyses 2-N,3-O-bis[(3R)-3-hydroxytetradecanoyl]-alpha-D-glucosaminyl 1-phosphate + UDP-2-N,3-O-bis[(3R)-3-hydroxytetradecanoyl]-alpha-D-glucosamine = lipid A disaccharide (E. coli) + UDP + H(+). It carries out the reaction a lipid X + a UDP-2-N,3-O-bis[(3R)-3-hydroxyacyl]-alpha-D-glucosamine = a lipid A disaccharide + UDP + H(+). Its pathway is glycolipid biosynthesis; lipid IV(A) biosynthesis; lipid IV(A) from (3R)-3-hydroxytetradecanoyl-[acyl-carrier-protein] and UDP-N-acetyl-alpha-D-glucosamine: step 5/6. Its function is as follows. Condensation of UDP-2,3-diacylglucosamine and 2,3-diacylglucosamine-1-phosphate to form lipid A disaccharide, a precursor of lipid A, a phosphorylated glycolipid that anchors the lipopolysaccharide to the outer membrane of the cell. This Escherichia fergusonii (strain ATCC 35469 / DSM 13698 / CCUG 18766 / IAM 14443 / JCM 21226 / LMG 7866 / NBRC 102419 / NCTC 12128 / CDC 0568-73) protein is Lipid-A-disaccharide synthase.